The following is a 494-amino-acid chain: Probable capsid protein (494 aa).

Residues 120 to 123 (RPKR) carry the Nuclear localization signal motif. The segment at 418 to 435 (CRCWVCNIEGHYANECPN) adopts a CCHC-type zinc-finger fold. A disordered region spans residues 474-494 (LSSSDSELDDTCEESSSEESE). Residues 479–494 (SELDDTCEESSSEESE) show a composition bias toward acidic residues.

It belongs to the caulimoviridae capsid protein family. In terms of assembly, interacts (via nuclear localization signal) with host importin alpha.

The protein localises to the virion. Its subcellular location is the host nucleus. Self assembles to form an icosahedral capsid, about 50 nm in diameter, nm, composed of 420 subunits of the viral capsid protein. The capsid encapsulates the genomic dsDNA. Following virus entry into host cell, provides nuclear import of the viral genome. Virus particles do not enter the nucleus, but dock at the nuclear membrane through the interaction with host importins. This is Probable capsid protein from Dianthus caryophyllus (Carnation).